The following is a 125-amino-acid chain: S-adenosylmethionine decarboxylase proenzyme (125 aa).

Catalysis depends on Ser-63, which acts as the Schiff-base intermediate with substrate; via pyruvic acid. Ser-63 carries the pyruvic acid (Ser); by autocatalysis modification. Residue His-68 is the Proton acceptor; for processing activity of the active site. Cys-83 (proton donor; for catalytic activity) is an active-site residue.

This sequence belongs to the prokaryotic AdoMetDC family. Type 1 subfamily. In terms of assembly, heterotetramer of two alpha and two beta chains arranged as a dimer of alpha/beta heterodimers. The cofactor is pyruvate. In terms of processing, is synthesized initially as an inactive proenzyme. Formation of the active enzyme involves a self-maturation process in which the active site pyruvoyl group is generated from an internal serine residue via an autocatalytic post-translational modification. Two non-identical subunits are generated from the proenzyme in this reaction, and the pyruvate is formed at the N-terminus of the alpha chain, which is derived from the carboxyl end of the proenzyme. The post-translation cleavage follows an unusual pathway, termed non-hydrolytic serinolysis, in which the side chain hydroxyl group of the serine supplies its oxygen atom to form the C-terminus of the beta chain, while the remainder of the serine residue undergoes an oxidative deamination to produce ammonia and the pyruvoyl group blocking the N-terminus of the alpha chain.

The catalysed reaction is S-adenosyl-L-methionine + H(+) = S-adenosyl 3-(methylsulfanyl)propylamine + CO2. It functions in the pathway amine and polyamine biosynthesis; S-adenosylmethioninamine biosynthesis; S-adenosylmethioninamine from S-adenosyl-L-methionine: step 1/1. Functionally, catalyzes the decarboxylation of S-adenosylmethionine to S-adenosylmethioninamine (dcAdoMet), the propylamine donor required for the synthesis of the polyamines spermine and spermidine from the diamine putrescine. In Moorella thermoacetica (strain ATCC 39073 / JCM 9320), this protein is S-adenosylmethionine decarboxylase proenzyme.